We begin with the raw amino-acid sequence, 557 residues long: Hepatocyte nuclear factor 1-beta (557 aa).

Residues 1–31 (MVSKLTSLQQELLSALLSSGVTKEVLVQALE) are dimerization. Positions 1 to 32 (MVSKLTSLQQELLSALLSSGVTKEVLVQALEE) constitute an HNF-p1 domain. Serine 49, serine 52, serine 75, and serine 80 each carry phosphoserine. The tract at residues 64–85 (TLTNGHAKGRLSGDEGSEDGDD) is disordered. The POU-specific atypical domain occupies 93-188 (KELQALNTEE…ILRQFNQTVQ (96 aa)). Positions 231–311 (MRRNRFKWGP…NRRKEEAFRQ (81 aa)) form a DNA-binding region, homeobox; HNF1-type. A disordered region spans residues 324–352 (HSLNPLLSHGSPHHQPSSSPPNKLSGVRY). Positions 328-344 (PLLSHGSPHHQPSSSPP) are enriched in low complexity.

It belongs to the HNF1 homeobox family. As to quaternary structure, binds DNA as a dimer. Can form homodimer or heterodimer with HNF1-alpha. Interacts (via HNF-p1 domain) with PCBD1; the interaction increases its transactivation activity.

It is found in the nucleus. Its function is as follows. Transcription factor that binds to the inverted palindrome 5'-GTTAATNATTAAC-3'. Binds to the FPC element in the cAMP regulatory unit of the PLAU gene. Transcriptional activity is increased by coactivator PCBD1. This is Hepatocyte nuclear factor 1-beta (HNF1B) from Homo sapiens (Human).